A 108-amino-acid polypeptide reads, in one-letter code: Nucleoid-associated protein BMASAVP1_A1850 (108 aa).

Positions 84-108 are disordered; it reads EATSQEKMSGMTSGLPLPPGFKLPF. The span at 85–95 shows a compositional bias: polar residues; sequence ATSQEKMSGMT. Residues 99-108 are compositionally biased toward pro residues; that stretch reads PLPPGFKLPF.

It belongs to the YbaB/EbfC family. As to quaternary structure, homodimer.

Its subcellular location is the cytoplasm. It is found in the nucleoid. In terms of biological role, binds to DNA and alters its conformation. May be involved in regulation of gene expression, nucleoid organization and DNA protection. In Burkholderia mallei (strain SAVP1), this protein is Nucleoid-associated protein BMASAVP1_A1850.